A 238-amino-acid polypeptide reads, in one-letter code: MGRKWANIVAKKTAKDGATSKVYAKFGVEIYVAAKQGEPDPELNTTLKFVIDRAKQAQVPKHVIDKAIDKAKGNTDETFVEGRYEGFGPNGSMIIVDTLTSNVNRTAANVRTAYGKNGGNMGASGSVSYLFDKKGVIVFAGDDADSVFEQLLEADVDVDDVEAEEGTITVYTAPTDLHKGIQALRDNGVEEFQVTELEMIPQSEVVLEGDDLETFEKLIDALESDDDVQKVYHNVADF.

Belongs to the TACO1 family. YeeN subfamily.

The protein resides in the cytoplasm. The protein is Probable transcriptional regulatory protein SpyM51586 of Streptococcus pyogenes serotype M5 (strain Manfredo).